A 188-amino-acid chain; its full sequence is Threonylcarbamoyl-AMP synthase (188 aa).

The 181-residue stretch at 8-188 (EGAQPGLHAY…DLATGKILRA (181 aa)) folds into the YrdC-like domain.

This sequence belongs to the SUA5 family. TsaC subfamily.

It localises to the cytoplasm. It catalyses the reaction L-threonine + hydrogencarbonate + ATP = L-threonylcarbamoyladenylate + diphosphate + H2O. Required for the formation of a threonylcarbamoyl group on adenosine at position 37 (t(6)A37) in tRNAs that read codons beginning with adenine. Catalyzes the conversion of L-threonine, HCO(3)(-)/CO(2) and ATP to give threonylcarbamoyl-AMP (TC-AMP) as the acyladenylate intermediate, with the release of diphosphate. This chain is Threonylcarbamoyl-AMP synthase, found in Thiobacillus denitrificans (strain ATCC 25259 / T1).